A 223-amino-acid polypeptide reads, in one-letter code: Large ribosomal subunit protein uL3 (223 aa).

The protein belongs to the universal ribosomal protein uL3 family. In terms of assembly, part of the 50S ribosomal subunit. Forms a cluster with proteins L14 and L19.

Its function is as follows. One of the primary rRNA binding proteins, it binds directly near the 3'-end of the 23S rRNA, where it nucleates assembly of the 50S subunit. This is Large ribosomal subunit protein uL3 from Mycoplasma capricolum subsp. capricolum (strain California kid / ATCC 27343 / NCTC 10154).